Here is a 476-residue protein sequence, read N- to C-terminus: ATP synthase subunit beta (476 aa).

154–161 (GGAGVGKT) serves as a coordination point for ATP.

Belongs to the ATPase alpha/beta chains family. As to quaternary structure, F-type ATPases have 2 components, CF(1) - the catalytic core - and CF(0) - the membrane proton channel. CF(1) has five subunits: alpha(3), beta(3), gamma(1), delta(1), epsilon(1). CF(0) has four main subunits: a(1), b(1), b'(1) and c(9-12).

Its subcellular location is the cell inner membrane. The enzyme catalyses ATP + H2O + 4 H(+)(in) = ADP + phosphate + 5 H(+)(out). Its function is as follows. Produces ATP from ADP in the presence of a proton gradient across the membrane. The catalytic sites are hosted primarily by the beta subunits. This is ATP synthase subunit beta from Rhodopseudomonas palustris (strain BisA53).